The primary structure comprises 233 residues: Large ribosomal subunit protein uL1 (233 aa).

The protein belongs to the universal ribosomal protein uL1 family. As to quaternary structure, part of the 50S ribosomal subunit.

Functionally, binds directly to 23S rRNA. The L1 stalk is quite mobile in the ribosome, and is involved in E site tRNA release. Protein L1 is also a translational repressor protein, it controls the translation of the L11 operon by binding to its mRNA. The protein is Large ribosomal subunit protein uL1 of Laribacter hongkongensis (strain HLHK9).